A 455-amino-acid polypeptide reads, in one-letter code: ATP-dependent protease ATPase subunit HslU (455 aa).

ATP-binding positions include Ile-19 and 61-66 (GVGKTE). The tract at residues 144–163 (ESKVGFANEPAEDAASKKEK) is disordered. Positions 268, 333, and 405 each coordinate ATP.

This sequence belongs to the ClpX chaperone family. HslU subfamily. In terms of assembly, a double ring-shaped homohexamer of HslV is capped on each side by a ring-shaped HslU homohexamer. The assembly of the HslU/HslV complex is dependent on binding of ATP.

Its subcellular location is the cytoplasm. ATPase subunit of a proteasome-like degradation complex; this subunit has chaperone activity. The binding of ATP and its subsequent hydrolysis by HslU are essential for unfolding of protein substrates subsequently hydrolyzed by HslV. HslU recognizes the N-terminal part of its protein substrates and unfolds these before they are guided to HslV for hydrolysis. This chain is ATP-dependent protease ATPase subunit HslU, found in Francisella tularensis subsp. novicida (strain U112).